A 176-amino-acid chain; its full sequence is Lipoprotein signal peptidase (176 aa).

The next 3 membrane-spanning stretches (helical) occupy residues 12–32 (WYWVVVLVFIADQVSKQWVLT), 67–87 (WQKWLFTFIAVAFSTILTIWL), and 94–114 (VWRLNLAYTLVIGGALGNLID). Active-site residues include D123 and D141. The chain crosses the membrane as a helical span at residues 133-153 (HFAAFNIADSAICIGAGLIIL).

The protein belongs to the peptidase A8 family.

The protein resides in the cell inner membrane. The catalysed reaction is Release of signal peptides from bacterial membrane prolipoproteins. Hydrolyzes -Xaa-Yaa-Zaa-|-(S,diacylglyceryl)Cys-, in which Xaa is hydrophobic (preferably Leu), and Yaa (Ala or Ser) and Zaa (Gly or Ala) have small, neutral side chains.. The protein operates within protein modification; lipoprotein biosynthesis (signal peptide cleavage). Functionally, this protein specifically catalyzes the removal of signal peptides from prolipoproteins. This chain is Lipoprotein signal peptidase, found in Shewanella sediminis (strain HAW-EB3).